Here is a 346-residue protein sequence, read N- to C-terminus: Putative D-alanine--D-lactate ligase (346 aa).

Positions 137-338 constitute an ATP-grasp domain; sequence YVVARSAGIA…LSEVIDRTLS (202 aa). 163–216 provides a ligand contact to ATP; sequence RLTYPVFVKPARSGSSFGVSKVCRPEDLATAVESARRYDTKVLIEAAVVGSEVG. The Mg(2+) site is built by aspartate 292, glutamate 305, and asparagine 307.

It belongs to the D-alanine--D-alanine ligase family. Mg(2+) is required as a cofactor. It depends on Mn(2+) as a cofactor.

Its subcellular location is the cell membrane. Functionally, required for resistance to glycopeptides antibiotics. D-Ala--D-Ala ligase of altered specificity which catalyzes ester bond formation between D-Ala and various D-hydroxy acids; producing a peptidoglycan which does not terminate by D-alanine but by D-lactate, thus preventing vancomycin binding. This chain is Putative D-alanine--D-lactate ligase, found in Streptomyces coelicolor (strain ATCC BAA-471 / A3(2) / M145).